The sequence spans 144 residues: NADH dehydrogenase [ubiquinone] 1 alpha subcomplex subunit 13 (144 aa).

Alanine 2 is modified (N-acetylalanine). The chain crosses the membrane as a helical span at residues 30-51 (LSGYSMLAIGIGTLIYGHWSIM). Residues 102–144 (PDWKVGESVFHTTRWVPPLIGELYGLRTTEEALHASHGFMWYT) are important for inducing cell death.

Belongs to the complex I NDUFA13 subunit family. In terms of assembly, complex I is composed of 45 different subunits. Interacts with CARD15, but not with CARD4. Interacts with STAT3, but not with STAT1, STAT2 and STAT5A. Interacts with OLFM4. As to quaternary structure, (Microbial infection) Interacts with HHV-8 IRF1, in the nucleus, with HPV-16 E6 and SV40 LT. Widely expressed, with highest expression in heart, skeletal muscle, liver, kidney and placenta. In intestinal mucosa, down-regulated in areas involved in Crohn disease and ulcerative colitis.

It localises to the mitochondrion inner membrane. The protein localises to the nucleus. Functionally, accessory subunit of the mitochondrial membrane respiratory chain NADH dehydrogenase (Complex I), that is believed not to be involved in catalysis. Complex I functions in the transfer of electrons from NADH to the respiratory chain. The immediate electron acceptor for the enzyme is believed to be ubiquinone. Involved in the interferon/all-trans-retinoic acid (IFN/RA) induced cell death. This apoptotic activity is inhibited by interaction with viral IRF1. Prevents the transactivation of STAT3 target genes. May play a role in CARD15-mediated innate mucosal responses and serve to regulate intestinal epithelial cell responses to microbes. This Homo sapiens (Human) protein is NADH dehydrogenase [ubiquinone] 1 alpha subcomplex subunit 13 (NDUFA13).